A 1379-amino-acid polypeptide reads, in one-letter code: DNA-directed RNA polymerase subunit beta (1379 aa).

It belongs to the RNA polymerase beta chain family. The RNAP catalytic core consists of 2 alpha, 1 beta, 1 beta' and 1 omega subunit. When a sigma factor is associated with the core the holoenzyme is formed, which can initiate transcription.

It carries out the reaction RNA(n) + a ribonucleoside 5'-triphosphate = RNA(n+1) + diphosphate. Functionally, DNA-dependent RNA polymerase catalyzes the transcription of DNA into RNA using the four ribonucleoside triphosphates as substrates. This chain is DNA-directed RNA polymerase subunit beta, found in Rhizobium etli (strain ATCC 51251 / DSM 11541 / JCM 21823 / NBRC 15573 / CFN 42).